We begin with the raw amino-acid sequence, 255 residues long: Ribonuclease HII (255 aa).

The RNase H type-2 domain occupies 72-255 (NYIAGVDEAG…RLSFVKNFVE (184 aa)). A divalent metal cation is bound by residues Asp-78, Glu-79, and Asp-170.

The protein belongs to the RNase HII family. Mn(2+) serves as cofactor. It depends on Mg(2+) as a cofactor.

Its subcellular location is the cytoplasm. The catalysed reaction is Endonucleolytic cleavage to 5'-phosphomonoester.. In terms of biological role, endonuclease that specifically degrades the RNA of RNA-DNA hybrids. The chain is Ribonuclease HII from Ruminiclostridium cellulolyticum (strain ATCC 35319 / DSM 5812 / JCM 6584 / H10) (Clostridium cellulolyticum).